We begin with the raw amino-acid sequence, 437 residues long: Adenylosuccinate synthetase (437 aa).

GTP is bound by residues 25-31, 53-55, and lysine 62; these read GDEGKGK and GHT. Aspartate 26 acts as the Proton acceptor in catalysis. Aspartate 26 and glycine 53 together coordinate Mg(2+). IMP-binding positions include 26-29 and 51-54; these read DEGK and NAGH. The active-site Proton donor is the histidine 54. IMP contacts are provided by threonine 141, arginine 155, asparagine 232, and threonine 247. Threonine 307 provides a ligand contact to GTP. Position 307–313 (307–313) interacts with substrate; the sequence is TTTKRPR. IMP is bound at residue arginine 311. Residues arginine 313, 339 to 341, and 425 to 427 each bind GTP; these read KLD and GVG.

The protein belongs to the adenylosuccinate synthetase family. In terms of assembly, homodimer. The cofactor is Mg(2+).

Its subcellular location is the cytoplasm. It catalyses the reaction IMP + L-aspartate + GTP = N(6)-(1,2-dicarboxyethyl)-AMP + GDP + phosphate + 2 H(+). Its pathway is purine metabolism; AMP biosynthesis via de novo pathway; AMP from IMP: step 1/2. Functionally, plays an important role in the salvage pathway for purine nucleotide biosynthesis. Catalyzes the first committed step in the biosynthesis of AMP from IMP. This is Adenylosuccinate synthetase from Plasmodium knowlesi (strain H).